Here is a 636-residue protein sequence, read N- to C-terminus: 1-deoxy-D-xylulose-5-phosphate synthase (636 aa).

Residues His-72 and 113–115 (GHA) each bind thiamine diphosphate. Asp-144 contributes to the Mg(2+) binding site. Residues 145–146 (GA), Asn-174, Tyr-287, and Glu-370 each bind thiamine diphosphate. Position 174 (Asn-174) interacts with Mg(2+).

This sequence belongs to the transketolase family. DXPS subfamily. As to quaternary structure, homodimer. It depends on Mg(2+) as a cofactor. Requires thiamine diphosphate as cofactor.

The catalysed reaction is D-glyceraldehyde 3-phosphate + pyruvate + H(+) = 1-deoxy-D-xylulose 5-phosphate + CO2. It participates in metabolic intermediate biosynthesis; 1-deoxy-D-xylulose 5-phosphate biosynthesis; 1-deoxy-D-xylulose 5-phosphate from D-glyceraldehyde 3-phosphate and pyruvate: step 1/1. Functionally, catalyzes the acyloin condensation reaction between C atoms 2 and 3 of pyruvate and glyceraldehyde 3-phosphate to yield 1-deoxy-D-xylulose-5-phosphate (DXP). The protein is 1-deoxy-D-xylulose-5-phosphate synthase of Crocosphaera subtropica (strain ATCC 51142 / BH68) (Cyanothece sp. (strain ATCC 51142)).